The primary structure comprises 804 residues: Tegument protein UL47 homolog (804 aa).

Positions M1–R15 are enriched in basic residues. Disordered stretches follow at residues M1–P42 and L58–S206. The Nuclear localization signal motif lies at S11–R31. Positions Y32–P42 are enriched in polar residues. The segment covering M62–D72 has biased composition (acidic residues). The segment covering S82–T93 has biased composition (polar residues). Positions S94–N109 are enriched in basic and acidic residues. Repeat copies occupy residues D117–E132, D133–E148, and D149–E164. The tract at residues D117–D203 is 6 X 16 AA approximate tandem repeats. A compositionally biased stretch (acidic residues) spans A118–Y204. A 1-4; truncated repeat occupies D170 to E180. The 1-5; truncated repeat unit spans residues D181 to E191. The stretch at D192–D203 is one 1-6; truncated repeat. The short motif at Q770–D792 is the Nuclear export signal element.

The protein belongs to the alphaherpesvirinae HHV-1 UL47 family. As to quaternary structure, interacts with US3 kinase. Interacts with ORF24 and ORF27; these interactions seem important for efficient virion nuclear egress. Interacts with ORF17/VHS. In terms of processing, phosphorylated by US3. This phosphorylation is required for proper nuclear localization.

The protein localises to the virion tegument. Its subcellular location is the host nucleus. It localises to the host cytoplasm. Functionally, tegument protein that can bind to various RNA transcripts. Plays a role in the attenuation of selective viral and cellular mRNA degradation by modulating the activity of host shutoff RNase ORF17/VHS. Also plays a role in the primary envelopment of virions in the perinuclear space, probably by interacting with two nuclear egress proteins ORF24 and ORF27. The sequence is that of Tegument protein UL47 homolog from Varicella-zoster virus (strain Oka vaccine) (HHV-3).